The primary structure comprises 163 residues: ATP synthase subunit b (163 aa).

Residues 10-29 form a helical membrane-spanning segment; sequence ALYQLLAFSVLLFFLSKFAL.

The protein belongs to the ATPase B chain family. In terms of assembly, F-type ATPases have 2 components, F(1) - the catalytic core - and F(0) - the membrane proton channel. F(1) has five subunits: alpha(3), beta(3), gamma(1), delta(1), epsilon(1). F(0) has three main subunits: a(1), b(2) and c(10-14). The alpha and beta chains form an alternating ring which encloses part of the gamma chain. F(1) is attached to F(0) by a central stalk formed by the gamma and epsilon chains, while a peripheral stalk is formed by the delta and b chains.

The protein resides in the cell membrane. Functionally, f(1)F(0) ATP synthase produces ATP from ADP in the presence of a proton or sodium gradient. F-type ATPases consist of two structural domains, F(1) containing the extramembraneous catalytic core and F(0) containing the membrane proton channel, linked together by a central stalk and a peripheral stalk. During catalysis, ATP synthesis in the catalytic domain of F(1) is coupled via a rotary mechanism of the central stalk subunits to proton translocation. Its function is as follows. Component of the F(0) channel, it forms part of the peripheral stalk, linking F(1) to F(0). The sequence is that of ATP synthase subunit b from Alkalihalophilus pseudofirmus (strain ATCC BAA-2126 / JCM 17055 / OF4) (Bacillus pseudofirmus).